The sequence spans 259 residues: Leucine-rich repeat-containing protein 61 (259 aa).

4 LRR repeats span residues 32–53 (SILLLKLRGLGLADLGCLGECL), 54–75 (GLEWLDLSGNALTHLGPLASLR), 76–97 (QLAVLNVSNNRLTGLEPLATCE), and 98–119 (NLQSLNAAGNLLATPGQLQCLA). In terms of domain architecture, LRRCT spans 138–178 (NPLCANPSYWAAVRELLPGLKVIDGERVIGRGSEFYQLCRD).

The protein is Leucine-rich repeat-containing protein 61 (LRRC61) of Homo sapiens (Human).